We begin with the raw amino-acid sequence, 331 residues long: Adenosine deaminase (331 aa).

2 residues coordinate Zn(2+): His-12 and His-14. Substrate is bound by residues His-14, Asp-16, and Gly-170. His-197 provides a ligand contact to Zn(2+). Glu-200 (proton donor) is an active-site residue. Residue Asp-278 coordinates Zn(2+). Asp-279 contributes to the substrate binding site.

This sequence belongs to the metallo-dependent hydrolases superfamily. Adenosine and AMP deaminases family. Adenosine deaminase subfamily. The cofactor is Zn(2+).

It carries out the reaction adenosine + H2O + H(+) = inosine + NH4(+). It catalyses the reaction 2'-deoxyadenosine + H2O + H(+) = 2'-deoxyinosine + NH4(+). Its function is as follows. Catalyzes the hydrolytic deamination of adenosine and 2-deoxyadenosine. This Shewanella sp. (strain MR-7) protein is Adenosine deaminase.